The chain runs to 92 residues: Small ribosomal subunit protein uS19c (92 aa).

Belongs to the universal ribosomal protein uS19 family.

The protein resides in the plastid. The protein localises to the chloroplast. Protein S19 forms a complex with S13 that binds strongly to the 16S ribosomal RNA. This chain is Small ribosomal subunit protein uS19c, found in Guizotia abyssinica (Niger).